A 1534-amino-acid polypeptide reads, in one-letter code: Ribosome-binding protein 1 (1534 aa).

Residues M1–Q7 lie on the Lumenal side of the membrane. A helical membrane pass occupies residues T8–V28. At S29–V1534 the chain is on the cytoplasmic side. Disordered stretches follow at residues Q45 to N91 and P125 to A152. A compositionally biased stretch (basic residues) spans T52–E63. Residues K64–P88 are compositionally biased toward basic and acidic residues. Low complexity predominate over residues P125 to S135. A Glycyl lysine isopeptide (Lys-Gly) (interchain with G-Cter in SUMO2) cross-link involves residue K148. 2 positions are modified to phosphoserine: S159 and S165. Disordered stretches follow at residues A173 to L780, K968 to L987, and R1021 to N1082. Low complexity predominate over residues K175–T194. 54 tandem repeats follow at residues A197–Q206, N207–P216, N217–L226, N227–Q236, N237–P246, N247–Q256, N257–Q266, N267–P276, N277–P286, N287–P296, N297–P306, N307–Q316, N317–P326, N327–Q336, N337–Q346, N347–P356, N357–P366, N367–P376, N377–P386, N387–Q396, N397–Q406, N407–Q416, N417–S426, S427–P436, N437–P446, N447–Q456, N457–P466, N467–Q476, N477–S486, N487–Q496, N497–P506, N507–Q516, N517–P526, N527–Q536, N537–P546, N547–P556, N557–P566, N567–P576, N577–P586, N587–P596, N597–P606, N607–P616, N617–P626, N627–P636, N637–P646, N647–Q656, N657–P666, N667–A676, N677–A686, G687–P696, N697–P706, N707–P716, N717–A726, and N727–P736. The 54 X 10 AA tandem repeats of [NASG]-[QL]-[GS]-[KRT]-[KR]-[AVTSEG]-[ED]-[AGVLS]-[ATGSV]-[PQLSA] stretch occupies residues A197 to P736. T275 carries the phosphothreonine modification. Over residues A395 to Q428 the composition is skewed to polar residues. The span at G474–G499 shows a compositional bias: polar residues. The span at T705–Q718 shows a compositional bias: polar residues. S715 carries the phosphoserine modification. S747 bears the Phosphoserine mark. Residue K752 forms a Glycyl lysine isopeptide (Lys-Gly) (interchain with G-Cter in SUMO1) linkage. S1032 is subject to Phosphoserine. Over residues A1059–A1080 the composition is skewed to basic and acidic residues. At K1064 the chain carries N6-acetyllysine. Phosphoserine occurs at positions 1091 and 1110. 3 disordered regions span residues E1224–N1251, K1391–K1416, and E1509–V1534. A compositionally biased stretch (basic and acidic residues) spans E1509 to S1528.

It localises to the endoplasmic reticulum membrane. Its function is as follows. Acts as a ribosome receptor and mediates interaction between the ribosome and the endoplasmic reticulum membrane. In Canis lupus familiaris (Dog), this protein is Ribosome-binding protein 1 (RRBP1).